A 358-amino-acid polypeptide reads, in one-letter code: Alanine racemase (358 aa).

Lys-35 (proton acceptor; specific for D-alanine) is an active-site residue. Lys-35 is modified (N6-(pyridoxal phosphate)lysine). Arg-130 lines the substrate pocket. Tyr-255 serves as the catalytic Proton acceptor; specific for L-alanine. A substrate-binding site is contributed by Met-303.

This sequence belongs to the alanine racemase family. Requires pyridoxal 5'-phosphate as cofactor.

It carries out the reaction L-alanine = D-alanine. The protein operates within amino-acid biosynthesis; D-alanine biosynthesis; D-alanine from L-alanine: step 1/1. Catalyzes the interconversion of L-alanine and D-alanine. May also act on other amino acids. In Shewanella sediminis (strain HAW-EB3), this protein is Alanine racemase (alr).